Consider the following 165-residue polypeptide: Nucleotide-binding protein NATL1_05371 (165 aa).

This sequence belongs to the YajQ family.

In terms of biological role, nucleotide-binding protein. The chain is Nucleotide-binding protein NATL1_05371 from Prochlorococcus marinus (strain NATL1A).